Reading from the N-terminus, the 410-residue chain is Ribosomal RNA large subunit methyltransferase G (410 aa).

It belongs to the methyltransferase superfamily. RlmG family.

The protein resides in the cytoplasm. It carries out the reaction guanosine(1835) in 23S rRNA + S-adenosyl-L-methionine = N(2)-methylguanosine(1835) in 23S rRNA + S-adenosyl-L-homocysteine + H(+). Its function is as follows. Specifically methylates the guanine in position 1835 (m2G1835) of 23S rRNA. In Alteromonas mediterranea (strain DSM 17117 / CIP 110805 / LMG 28347 / Deep ecotype), this protein is Ribosomal RNA large subunit methyltransferase G.